The sequence spans 189 residues: Adenylate kinase (189 aa).

11-16 (GSGKGT) contacts ATP. The NMP stretch occupies residues 31–60 (STGDVLRAEIKNGTELGKTAKGYIDQGQLI). AMP is bound by residues Thr32, Arg37, 58-60 (QLI), 86-89 (GFPR), and Gln93. Residues 127–137 (KRGKESGRADD) form an LID region. Arg128 lines the ATP pocket. Arg134 and Arg145 together coordinate AMP. Gly173 is a binding site for ATP.

Belongs to the adenylate kinase family. As to quaternary structure, monomer.

It is found in the cytoplasm. It catalyses the reaction AMP + ATP = 2 ADP. The protein operates within purine metabolism; AMP biosynthesis via salvage pathway; AMP from ADP: step 1/1. Its function is as follows. Catalyzes the reversible transfer of the terminal phosphate group between ATP and AMP. Plays an important role in cellular energy homeostasis and in adenine nucleotide metabolism. This chain is Adenylate kinase, found in Bacteroides fragilis (strain ATCC 25285 / DSM 2151 / CCUG 4856 / JCM 11019 / LMG 10263 / NCTC 9343 / Onslow / VPI 2553 / EN-2).